A 253-amino-acid chain; its full sequence is Glutamate racemase (253 aa).

Substrate contacts are provided by residues 7–8 and 39–40; these read DS and YG. Cysteine 70 functions as the Proton donor/acceptor in the catalytic mechanism. 71 to 72 contacts substrate; that stretch reads NS. Catalysis depends on cysteine 179, which acts as the Proton donor/acceptor. 180–181 lines the substrate pocket; it reads TH.

The protein belongs to the aspartate/glutamate racemases family.

It catalyses the reaction L-glutamate = D-glutamate. Its pathway is cell wall biogenesis; peptidoglycan biosynthesis. In terms of biological role, provides the (R)-glutamate required for cell wall biosynthesis. This chain is Glutamate racemase, found in Nitratiruptor sp. (strain SB155-2).